We begin with the raw amino-acid sequence, 250 residues long: Flap endonuclease Xni (250 aa).

Aspartate 104 is a binding site for Mg(2+). The 90-residue stretch at 160-249 (VQPQQLTDFW…LQGNLQQLRL (90 aa)) folds into the 5'-3' exonuclease domain. Residues leucine 171, alanine 172, proline 180, valine 182, and isoleucine 185 each contribute to the K(+) site. Residues 184-189 (GIGPKS) form an interaction with DNA region.

It belongs to the Xni family. Mg(2+) is required as a cofactor. K(+) serves as cofactor.

Has flap endonuclease activity. During DNA replication, flap endonucleases cleave the 5'-overhanging flap structure that is generated by displacement synthesis when DNA polymerase encounters the 5'-end of a downstream Okazaki fragment. This Sodalis glossinidius (strain morsitans) protein is Flap endonuclease Xni.